We begin with the raw amino-acid sequence, 163 residues long: MARGGSFSRLRLRAGVVVAAAAAALLLFAVVAPPAAALNIGLQSAGDGASKAGLCSRTCESDHCTTPPLLRYGKYCGILYSGCPGEQPCDELDACCMHHDNCVQAKNDYLSTACNEELLECLARLREGSSTFQGNKCMIDEVIDVISLVIEAAVVAGRLLHKP.

A signal peptide spans 1–43 (MARGGSFSRLRLRAGVVVAAAAAALLLFAVVAPPAAALNIGLQ). 6 disulfides stabilise this stretch: cysteine 55-cysteine 83, cysteine 59-cysteine 89, cysteine 64-cysteine 137, cysteine 76-cysteine 96, cysteine 95-cysteine 121, and cysteine 102-cysteine 114. Positions 75, 77, and 80 each coordinate Ca(2+). Residue histidine 99 is part of the active site. Aspartate 100 serves as a coordination point for Ca(2+).

Belongs to the phospholipase A2 family. The cofactor is Ca(2+).

It is found in the secreted. The catalysed reaction is a 1,2-diacyl-sn-glycero-3-phosphocholine + H2O = a 1-acyl-sn-glycero-3-phosphocholine + a fatty acid + H(+). Its activity is regulated as follows. Inhibited by EGTA. PA2 catalyzes the calcium-dependent hydrolysis of the 2-acyl groups in 3-sn-phosphoglycerides. Releases lysophospholipids (LPLs) and free fatty acids (FFAs) from membrane phospholipids in response to hormones and other external stimuli. The chain is Phospholipase A2 homolog 3 (PLA2-III) from Oryza sativa subsp. japonica (Rice).